Here is a 374-residue protein sequence, read N- to C-terminus: Type II methyltransferase M.NgoFVII (374 aa).

An SAM-dependent MTase C5-type domain is found at proline 16–asparagine 344. Cysteine 88 is a catalytic residue.

The protein belongs to the class I-like SAM-binding methyltransferase superfamily. C5-methyltransferase family.

The catalysed reaction is a 2'-deoxycytidine in DNA + S-adenosyl-L-methionine = a 5-methyl-2'-deoxycytidine in DNA + S-adenosyl-L-homocysteine + H(+). Its function is as follows. A methylase, recognizes the double-stranded sequence 5'-GCSGC-3', methylates C-5 on both strands, and protects the DNA from cleavage by the NgoFVII endonuclease. This Neisseria gonorrhoeae protein is Type II methyltransferase M.NgoFVII (ngoFVIIM).